Here is a 252-residue protein sequence, read N- to C-terminus: tRNA (guanine-N(1)-)-methyltransferase (252 aa).

Residues Gly-113 and 133 to 138 (LGDYVL) contribute to the S-adenosyl-L-methionine site.

It belongs to the RNA methyltransferase TrmD family. Homodimer.

Its subcellular location is the cytoplasm. The catalysed reaction is guanosine(37) in tRNA + S-adenosyl-L-methionine = N(1)-methylguanosine(37) in tRNA + S-adenosyl-L-homocysteine + H(+). In terms of biological role, specifically methylates guanosine-37 in various tRNAs. This Stenotrophomonas maltophilia (strain K279a) protein is tRNA (guanine-N(1)-)-methyltransferase.